The following is a 435-amino-acid chain: 3-phosphoshikimate 1-carboxyvinyltransferase (435 aa).

Residues Lys22, Ser23, and Arg27 each contribute to the 3-phosphoshikimate site. Lys22 is a phosphoenolpyruvate binding site. Phosphoenolpyruvate is bound by residues Gly95 and Arg123. 3-phosphoshikimate-binding residues include Ser168, Gln170, Asp319, and Lys346. Position 170 (Gln170) interacts with phosphoenolpyruvate. Asp319 (proton acceptor) is an active-site residue. 2 residues coordinate phosphoenolpyruvate: Arg350 and Arg393.

It belongs to the EPSP synthase family. Monomer.

It localises to the cytoplasm. It carries out the reaction 3-phosphoshikimate + phosphoenolpyruvate = 5-O-(1-carboxyvinyl)-3-phosphoshikimate + phosphate. It functions in the pathway metabolic intermediate biosynthesis; chorismate biosynthesis; chorismate from D-erythrose 4-phosphate and phosphoenolpyruvate: step 6/7. Catalyzes the transfer of the enolpyruvyl moiety of phosphoenolpyruvate (PEP) to the 5-hydroxyl of shikimate-3-phosphate (S3P) to produce enolpyruvyl shikimate-3-phosphate and inorganic phosphate. The chain is 3-phosphoshikimate 1-carboxyvinyltransferase from Chloroflexus aurantiacus (strain ATCC 29364 / DSM 637 / Y-400-fl).